A 142-amino-acid chain; its full sequence is Spliceosomal protein DIB1 (142 aa).

It belongs to the DIM1 family. As to quaternary structure, component of the 25S [U4/U6.U5] tri-snRNP.

Its subcellular location is the nucleus. In terms of biological role, essential role in pre-mRNA splicing. Also essential for entry into mitosis (G2/M progression) as well as for chromosome segregation during mitosis. This is Spliceosomal protein DIB1 (DIB1) from Candida glabrata (strain ATCC 2001 / BCRC 20586 / JCM 3761 / NBRC 0622 / NRRL Y-65 / CBS 138) (Yeast).